A 152-amino-acid chain; its full sequence is ALK and LTK ligand 2 (152 aa).

Positions Met1–Gly24 are cleaved as a signal peptide. Intrachain disulfides connect Cys111-Cys147 and Cys125-Cys134.

Belongs to the ALKAL family. As to quaternary structure, homodimer; interchain disulfide bond is not required for homodimerization. Widely expressed with highest levels in adrenal gland and modest levels in pancreas, testis and uterus.

Its subcellular location is the secreted. It is found in the cell membrane. Cytokine that acts as a physiological ligand for receptor tyrosine kinases LTK and ALK, leading to their activation. Cytokine-binding is sufficient to activate LTK. In contrast, ALKAL2-driven activation of ALK is coupled with heparin-binding to ALK. Stimulation of ALK signaling is involved in neural development and regulation of energy expenditure. This chain is ALK and LTK ligand 2, found in Homo sapiens (Human).